The sequence spans 192 residues: Probable nicotinate-nucleotide adenylyltransferase (192 aa).

It belongs to the NadD family.

The enzyme catalyses nicotinate beta-D-ribonucleotide + ATP + H(+) = deamido-NAD(+) + diphosphate. It functions in the pathway cofactor biosynthesis; NAD(+) biosynthesis; deamido-NAD(+) from nicotinate D-ribonucleotide: step 1/1. In terms of biological role, catalyzes the reversible adenylation of nicotinate mononucleotide (NaMN) to nicotinic acid adenine dinucleotide (NaAD). This Rhizobium leguminosarum bv. trifolii (strain WSM2304) protein is Probable nicotinate-nucleotide adenylyltransferase.